Consider the following 115-residue polypeptide: UPF0738 protein SACOL1009 (115 aa).

The protein belongs to the UPF0738 family.

The protein is UPF0738 protein SACOL1009 of Staphylococcus aureus (strain COL).